The primary structure comprises 305 residues: Beta-lactamase ROB-1 (305 aa).

Positions 1-33 are cleaved as a signal peptide; sequence MLNKLKIGTLLLLTLTACSPNSVHSVTSNPQPA. Residue Ser86 is the Acyl-ester intermediate of the active site. 248-250 is a binding site for substrate; the sequence is KSG.

Belongs to the class-A beta-lactamase family.

It catalyses the reaction a beta-lactam + H2O = a substituted beta-amino acid. In Actinobacillus pleuropneumoniae (Haemophilus pleuropneumoniae), this protein is Beta-lactamase ROB-1 (rob1).